Consider the following 429-residue polypeptide: Bifunctional protein GlmU (429 aa).

The segment at 1–223 (MKISVLILAA…EQDFMGVNDK (223 aa)) is pyrophosphorylase. UDP-N-acetyl-alpha-D-glucosamine contacts are provided by residues 8-11 (LAAG), Lys-22, Gln-74, and 81-82 (GT). Asp-102 is a Mg(2+) binding site. Residues Gly-135, Glu-149, Asn-164, and Asn-221 each coordinate UDP-N-acetyl-alpha-D-glucosamine. Asn-221 serves as a coordination point for Mg(2+). The interval 224-244 (IELCLAQDLMQEAIKKEWMKQ) is linker. The interval 245-429 (GVIFHMPATT…KDYFYTKFKK (185 aa)) is N-acetyltransferase. Residues Arg-308 and Lys-325 each contribute to the UDP-N-acetyl-alpha-D-glucosamine site. Residue His-336 is the Proton acceptor of the active site. Positions 339 and 350 each coordinate UDP-N-acetyl-alpha-D-glucosamine. Acetyl-CoA contacts are provided by residues 359–360 (NY), Ser-378, Ala-396, and Arg-413.

The protein in the N-terminal section; belongs to the N-acetylglucosamine-1-phosphate uridyltransferase family. This sequence in the C-terminal section; belongs to the transferase hexapeptide repeat family. As to quaternary structure, homotrimer. Mg(2+) is required as a cofactor.

It localises to the cytoplasm. The enzyme catalyses alpha-D-glucosamine 1-phosphate + acetyl-CoA = N-acetyl-alpha-D-glucosamine 1-phosphate + CoA + H(+). It carries out the reaction N-acetyl-alpha-D-glucosamine 1-phosphate + UTP + H(+) = UDP-N-acetyl-alpha-D-glucosamine + diphosphate. It participates in nucleotide-sugar biosynthesis; UDP-N-acetyl-alpha-D-glucosamine biosynthesis; N-acetyl-alpha-D-glucosamine 1-phosphate from alpha-D-glucosamine 6-phosphate (route II): step 2/2. The protein operates within nucleotide-sugar biosynthesis; UDP-N-acetyl-alpha-D-glucosamine biosynthesis; UDP-N-acetyl-alpha-D-glucosamine from N-acetyl-alpha-D-glucosamine 1-phosphate: step 1/1. Its pathway is bacterial outer membrane biogenesis; LPS lipid A biosynthesis. Functionally, catalyzes the last two sequential reactions in the de novo biosynthetic pathway for UDP-N-acetylglucosamine (UDP-GlcNAc). The C-terminal domain catalyzes the transfer of acetyl group from acetyl coenzyme A to glucosamine-1-phosphate (GlcN-1-P) to produce N-acetylglucosamine-1-phosphate (GlcNAc-1-P), which is converted into UDP-GlcNAc by the transfer of uridine 5-monophosphate (from uridine 5-triphosphate), a reaction catalyzed by the N-terminal domain. The protein is Bifunctional protein GlmU of Campylobacter lari (strain RM2100 / D67 / ATCC BAA-1060).